Consider the following 477-residue polypeptide: Succinate-semialdehyde dehydrogenase [NADP(+)] (477 aa).

NADP(+) is bound by residues 142 to 143 (WN), 166 to 169 (KHSE), and 218 to 219 (GS). Glu240 acts as the Proton acceptor in catalysis. Leu241 serves as a coordination point for NADP(+). Cys274 acts as the Nucleophile in catalysis. Glu371 is a binding site for NADP(+).

The protein belongs to the aldehyde dehydrogenase family.

It catalyses the reaction succinate semialdehyde + NADP(+) + H2O = succinate + NADPH + 2 H(+). It functions in the pathway amino-acid degradation; 4-aminobutanoate degradation. In terms of biological role, catalyzes the NADP(+) dependent oxidation of succinate semialdehyde to succinate. This is Succinate-semialdehyde dehydrogenase [NADP(+)] (ssdA) from Deinococcus radiodurans (strain ATCC 13939 / DSM 20539 / JCM 16871 / CCUG 27074 / LMG 4051 / NBRC 15346 / NCIMB 9279 / VKM B-1422 / R1).